The chain runs to 236 residues: Phosphoribosylformylglycinamidine synthase subunit PurQ (236 aa).

The 233-residue stretch at 2 to 234 (RFAVVTFPGS…LSVGLEVAHS (233 aa)) folds into the Glutamine amidotransferase type-1 domain. Cys86 (nucleophile) is an active-site residue. Active-site residues include His203 and Glu205.

Part of the FGAM synthase complex composed of 1 PurL, 1 PurQ and 2 PurS subunits.

The protein resides in the cytoplasm. The catalysed reaction is N(2)-formyl-N(1)-(5-phospho-beta-D-ribosyl)glycinamide + L-glutamine + ATP + H2O = 2-formamido-N(1)-(5-O-phospho-beta-D-ribosyl)acetamidine + L-glutamate + ADP + phosphate + H(+). The enzyme catalyses L-glutamine + H2O = L-glutamate + NH4(+). Its pathway is purine metabolism; IMP biosynthesis via de novo pathway; 5-amino-1-(5-phospho-D-ribosyl)imidazole from N(2)-formyl-N(1)-(5-phospho-D-ribosyl)glycinamide: step 1/2. In terms of biological role, part of the phosphoribosylformylglycinamidine synthase complex involved in the purines biosynthetic pathway. Catalyzes the ATP-dependent conversion of formylglycinamide ribonucleotide (FGAR) and glutamine to yield formylglycinamidine ribonucleotide (FGAM) and glutamate. The FGAM synthase complex is composed of three subunits. PurQ produces an ammonia molecule by converting glutamine to glutamate. PurL transfers the ammonia molecule to FGAR to form FGAM in an ATP-dependent manner. PurS interacts with PurQ and PurL and is thought to assist in the transfer of the ammonia molecule from PurQ to PurL. In Thermomicrobium roseum (strain ATCC 27502 / DSM 5159 / P-2), this protein is Phosphoribosylformylglycinamidine synthase subunit PurQ.